The chain runs to 937 residues: Inactive tyrosine-protein kinase transmembrane receptor ROR1 (937 aa).

Positions 1–29 (MHRPRRRGTRPPLLALLAALLLAARGAAA) are cleaved as a signal peptide. At 30–406 (QETELSVSAE…KEKNKMEILY (377 aa)) the chain is on the extracellular side. In terms of domain architecture, Ig-like C2-type spans 42–147 (PTSSWNISSE…EVVSSTGVLF (106 aa)). N-linked (GlcNAc...) asparagine glycans are attached at residues Asn-47 and Asn-66. Disulfide bonds link Cys-79–Cys-131, Cys-170–Cys-235, Cys-178–Cys-228, Cys-219–Cys-260, Cys-248–Cys-296, Cys-252–Cys-282, Cys-313–Cys-391, Cys-334–Cys-374, and Cys-362–Cys-386. The region spanning 165–299 (EEDGFCQPYR…SPEAANCIRI (135 aa)) is the FZ domain. A glycan (N-linked (GlcNAc...) asparagine) is linked at Asn-184. In terms of domain architecture, Kringle spans 312–391 (KCYNSTGVDY…KSDLCDIPAC (80 aa)). N-linked (GlcNAc...) asparagine glycosylation occurs at Asn-315. The helical transmembrane segment at 407-427 (ILVPSVAIPLAIALLFFFICV) threads the bilayer. The Cytoplasmic portion of the chain corresponds to 428–937 (CRNNQKSSSA…HTESMISAEL (510 aa)). The Protein kinase domain occupies 473-746 (VRFMEELGEC…PRFKDIHVRL (274 aa)). Residues 479–487 (LGECAFGKI) and Lys-506 contribute to the ATP site. Tyr-645 carries the phosphotyrosine; by autocatalysis modification. A compositionally biased stretch (low complexity) spans 753–762 (SSHTSSTTPS). Disordered stretches follow at residues 753 to 779 (SSHT…SPVS) and 833 to 890 (AAHY…HMSI). Over residues 763–779 (GGNATTQTTSLSASPVS) the composition is skewed to polar residues. The segment covering 854-864 (RSPSSASGSTS) has biased composition (low complexity). A compositionally biased stretch (polar residues) spans 865 to 880 (TGHVTSLPSSGSNQEA).

It belongs to the protein kinase superfamily. Tyr protein kinase family. ROR subfamily. As to quaternary structure, interacts with ERBB2 and IGFBP5. As to expression, expressed strongly in human heart, lung and kidney, but weakly in the CNS. Isoform Short is strongly expressed in fetal and adult CNS and in a variety of human cancers, including those originating from CNS or PNS neuroectoderm.

It localises to the membrane. It is found in the cell projection. The protein localises to the axon. Functionally, has very low kinase activity in vitro and is unlikely to function as a tyrosine kinase in vivo. Receptor for ligand WNT5A which activate downstream NFkB signaling pathway and may result in the inhibition of WNT3A-mediated signaling. In inner ear, crucial for spiral ganglion neurons to innervate auditory hair cells. Via IGFBP5 ligand, forms a complex with ERBB2 to enhance CREB oncogenic signaling. This Homo sapiens (Human) protein is Inactive tyrosine-protein kinase transmembrane receptor ROR1 (ROR1).